An 86-amino-acid chain; its full sequence is Small ribosomal subunit protein uS15 (86 aa).

Positions 1-22 (MSIDTQKVIEDNKRSSADTGSP) are disordered. Over residues 7–16 (KVIEDNKRSS) the composition is skewed to basic and acidic residues.

This sequence belongs to the universal ribosomal protein uS15 family. As to quaternary structure, part of the 30S ribosomal subunit. Forms a bridge to the 50S subunit in the 70S ribosome, contacting the 23S rRNA.

One of the primary rRNA binding proteins, it binds directly to 16S rRNA where it helps nucleate assembly of the platform of the 30S subunit by binding and bridging several RNA helices of the 16S rRNA. Functionally, forms an intersubunit bridge (bridge B4) with the 23S rRNA of the 50S subunit in the ribosome. The protein is Small ribosomal subunit protein uS15 of Stenotrophomonas maltophilia (strain R551-3).